We begin with the raw amino-acid sequence, 226 residues long: LIM domain-containing protein PLIM2a (226 aa).

2 LIM zinc-binding domains span residues 8–68 (DKCK…LFKE) and 104–164 (DKCA…LFLE). Positions 173-226 (QAAANHRRSASSGGASPPSDDHKPDDTASIPEAKEDDAAPEAAGEEEPEPVVES) are disordered. Residues 191–209 (SDDHKPDDTASIPEAKEDD) show a composition bias toward basic and acidic residues. Residues 210–226 (AAPEAAGEEEPEPVVES) are compositionally biased toward acidic residues.

As to quaternary structure, interacts with F-actin. In terms of tissue distribution, predominantly expressed in flowers, in the tapetum and in pollen grains. Detected in leaves and stems.

The protein localises to the cytoplasm. It localises to the cytoskeleton. Its function is as follows. Binds to actin filaments and promotes cross-linking into thick bundles. Has an actin-stabilizing activity. The actin regulatory activities are inhibited by pH &gt; 6.8 but are [Ca(2+)] independent. This is LIM domain-containing protein PLIM2a from Arabidopsis thaliana (Mouse-ear cress).